The sequence spans 289 residues: Heme oxygenase 1 (289 aa).

Topologically, residues 1-266 (MERPQLDSMS…SQISTSSSQT (266 aa)) are cytoplasmic. Heme b-binding residues include Lys18, His25, Tyr134, and Arg183. Residues 225–261 (HKDQSPSQTEFLRQRPASLVQDTTSAETPRGKSQIST) are disordered. A phosphoserine mark is found at Ser229 and Ser242. The segment covering 244–261 (VQDTTSAETPRGKSQIST) has biased composition (polar residues). A helical; Anchor for type IV membrane protein transmembrane segment spans residues 267–289 (PLLRWVLTLSFLLATVAVGIYAM).

This sequence belongs to the heme oxygenase family. Homodimer and higher order homooligomer. Oligomerization is crucial for its stability and function in the endoplasmic reticulum. Interacts with FLVCR2; this interaction is potentiated in the presence of heme. In terms of processing, a soluble form arises by proteolytic removal of the membrane anchor.

The protein resides in the endoplasmic reticulum membrane. The catalysed reaction is heme b + 3 reduced [NADPH--hemoprotein reductase] + 3 O2 = biliverdin IXalpha + CO + Fe(2+) + 3 oxidized [NADPH--hemoprotein reductase] + 3 H2O + H(+). Inhibited by metalloporphyrins such as Sn- and Zn-protoporphyrins. In terms of biological role, catalyzes the oxidative cleavage of heme at the alpha-methene bridge carbon, released as carbon monoxide (CO), to generate biliverdin IXalpha, while releasing the central heme iron chelate as ferrous iron. Affords protection against programmed cell death and this cytoprotective effect relies on its ability to catabolize free heme and prevent it from sensitizing cells to undergo apoptosis. Catalyzes the oxidative cleavage of heme at the alpha-methene bridge carbon, released as carbon monoxide (CO), to generate biliverdin IXalpha, while releasing the central heme iron chelate as ferrous iron. The sequence is that of Heme oxygenase 1 (Hmox1) from Rattus norvegicus (Rat).